Here is a 127-residue protein sequence, read N- to C-terminus: Fumarate reductase subunit C (127 aa).

3 helical membrane-spanning segments follow: residues 30–50 (ATVL…GCLV), 58–78 (GWLA…ALLG), and 107–127 (IIVL…LIVV).

The protein belongs to the FrdC family. In terms of assembly, part of an enzyme complex containing four subunits: a flavoprotein (FrdA), an iron-sulfur protein (FrdB), and two hydrophobic anchor proteins (FrdC and FrdD).

Its subcellular location is the cell inner membrane. In terms of biological role, anchors the catalytic components of the fumarate reductase complex to the cell membrane, binds quinones. In Vibrio parahaemolyticus serotype O3:K6 (strain RIMD 2210633), this protein is Fumarate reductase subunit C.